The chain runs to 122 residues: Small ribosomal subunit protein bS16 (122 aa).

The interval 87-122 (AQSNPKKALPKKKAQERAAASAAAAEKAAAAAAPEA) is disordered. Over residues 103 to 122 (RAAASAAAAEKAAAAAAPEA) the composition is skewed to low complexity.

The protein belongs to the bacterial ribosomal protein bS16 family.

The chain is Small ribosomal subunit protein bS16 from Methylocella silvestris (strain DSM 15510 / CIP 108128 / LMG 27833 / NCIMB 13906 / BL2).